The sequence spans 215 residues: 16S rRNA (adenine(1408)-N(1))-methyltransferase (215 aa).

Residues Gly-32, Asp-55, 87-88, 102-107, and 191-193 contribute to the S-adenosyl-L-methionine site; these read AE, LMPWGS, and TSW.

It belongs to the methyltransferase superfamily. Kanamycin-apramycin resistance family.

It carries out the reaction adenosine(1408) in 16S rRNA + S-adenosyl-L-methionine = N(1)-methyladenosine(1408) in 16S rRNA + S-adenosyl-L-homocysteine + H(+). Functionally, specifically methylates the N(1) position of adenine 1408 in 16S rRNA. Confers resistance to various aminoglycosides, including kanamycin, neomycin and apramycin. The protein is 16S rRNA (adenine(1408)-N(1))-methyltransferase (kamB) of Streptoalloteichus tenebrarius (strain ATCC 17920 / DSM 40477 / JCM 4838 / CBS 697.72 / NBRC 16177 / NCIMB 11028 / NRRL B-12390 / A12253. 1 / ISP 5477) (Streptomyces tenebrarius).